We begin with the raw amino-acid sequence, 182 residues long: Ribosome-recycling factor (182 aa).

The protein belongs to the RRF family.

The protein localises to the cytoplasm. Responsible for the release of ribosomes from messenger RNA at the termination of protein biosynthesis. May increase the efficiency of translation by recycling ribosomes from one round of translation to another. This Prochlorococcus marinus (strain SARG / CCMP1375 / SS120) protein is Ribosome-recycling factor.